We begin with the raw amino-acid sequence, 173 residues long: Inorganic pyrophosphatase (173 aa).

Residues lysine 29, arginine 43, and tyrosine 55 each coordinate substrate. 3 residues coordinate Mg(2+): aspartate 65, aspartate 70, and aspartate 102. Tyrosine 141 lines the substrate pocket.

This sequence belongs to the PPase family. In terms of assembly, homohexamer. Requires Mg(2+) as cofactor.

The protein resides in the cytoplasm. The enzyme catalyses diphosphate + H2O = 2 phosphate + H(+). In terms of biological role, catalyzes the hydrolysis of inorganic pyrophosphate (PPi) forming two phosphate ions. This Gluconobacter oxydans (strain 621H) (Gluconobacter suboxydans) protein is Inorganic pyrophosphatase.